We begin with the raw amino-acid sequence, 246 residues long: Peptide methionine sulfoxide reductase (246 aa).

Catalysis depends on Cys48, which acts as the Cysteine sulfenic acid (-SOH) intermediate. A disulfide bond links Cys48 and Cys246.

Post-translationally, conjugated to URM1, a ubiquitin-like protein.

The enzyme catalyses L-methionyl-[protein] + [thioredoxin]-disulfide + H2O = L-methionyl-(S)-S-oxide-[protein] + [thioredoxin]-dithiol. The catalysed reaction is [thioredoxin]-disulfide + L-methionine + H2O = L-methionine (S)-S-oxide + [thioredoxin]-dithiol. Its function is as follows. Has an important function as a repair enzyme for proteins that have been inactivated by oxidation. Catalyzes the reduction of methionine sulfoxide in proteins to methionine. Does not catalyze the reverse reaction involving the oxidation of methionine residues. In Drosophila melanogaster (Fruit fly), this protein is Peptide methionine sulfoxide reductase.